The following is a 355-amino-acid chain: Methylthioribose-1-phosphate isomerase (355 aa).

Substrate contacts are provided by residues 47 to 49 (RGA), Arg-90, and Gln-197. Residue Asp-238 is the Proton donor of the active site. Position 248–249 (248–249 (NK)) interacts with substrate.

It belongs to the eIF-2B alpha/beta/delta subunits family. MtnA subfamily.

The catalysed reaction is 5-(methylsulfanyl)-alpha-D-ribose 1-phosphate = 5-(methylsulfanyl)-D-ribulose 1-phosphate. It functions in the pathway amino-acid biosynthesis; L-methionine biosynthesis via salvage pathway; L-methionine from S-methyl-5-thio-alpha-D-ribose 1-phosphate: step 1/6. Functionally, catalyzes the interconversion of methylthioribose-1-phosphate (MTR-1-P) into methylthioribulose-1-phosphate (MTRu-1-P). This is Methylthioribose-1-phosphate isomerase from Herpetosiphon aurantiacus (strain ATCC 23779 / DSM 785 / 114-95).